Reading from the N-terminus, the 122-residue chain is Glycine cleavage system H protein (122 aa).

The Lipoyl-binding domain maps to 19-101 (MVTVGVTHYA…ETEGWLWKMT (83 aa)). N6-lipoyllysine is present on K60.

The protein belongs to the GcvH family. As to quaternary structure, the glycine cleavage system is composed of four proteins: P, T, L and H. Requires (R)-lipoate as cofactor.

Its function is as follows. The glycine cleavage system catalyzes the degradation of glycine. The H protein shuttles the methylamine group of glycine from the P protein to the T protein. This chain is Glycine cleavage system H protein, found in Bartonella tribocorum (strain CIP 105476 / IBS 506).